The following is a 461-amino-acid chain: MNDQYHRAARDGYLELLKEATRKELNAPDEDGMTPTLWAAYHGNLESLRLIVSRGGDPDKCDIWGNTPLHLAASNGHLHCLSFLVSFGANIWCLDNDYHTPLDMAAMKGHMECVRYLDSIAAKQSSLNPKLVGKLKDKAFREAERRIRECAKMQRKHHERMERRYRRELAERSDTLSFSSLTSSTLSRRLQHMTLGSQLPYSQATLHGTAKGKAKIQKKLERRKQGGEGTFKVSEDGRKSVRSLSGLQLGSDVMFVRQGTYANPKEWGRAPLRDMFLSDEDSVSRATLAAEPAHSEVSTDSGHDSLFTRPGLGTMVFRRNYVSSGLHGLGREDGGLDGAGTPRGRLHSSPSLDDDSLGSANSLQDRSCGEELPWDELDLGLDEDLEPETSPLETFLASLHMEDFASLLRHEKIDLEALMLCSDLDLRSISVPLGPRKKILGAVRRRRQALERPLALEDTEL.

ANK repeat units lie at residues 31 to 60 (DGMTPTLWAAYHGNLESLRLIVSRGGDPDK), 64 to 93 (WGNTPLHLAASNGHLHCLSFLVSFGANIWC), and 97 to 126 (DYHTPLDMAAMKGHMECVRYLDSIAAKQSS). The disordered stretch occupies residues 329-368 (LGREDGGLDGAGTPRGRLHSSPSLDDDSLGSANSLQDRSC). An SAM domain is found at 385-447 (LEPETSPLET…KILGAVRRRR (63 aa)). Residue serine 422 is modified to Phosphoserine.

Part of a complex composed of USH1C, USH1G and MYO7A. Interacts with USH1C (via the first PDZ domain). Interacts with PDZD7. Interacts with CDH23 and PCDH15; these interactions may recruit USH1G to the plasma membrane. Interacts with intraflagellar transport proteins IFT20, IFT52 and IFT57. Interacts with splicing factors SF3B1, PRPF6, PRPF31 and SON. Interacts with the U4/U6.U5 tri-small nuclear ribonucleoprotein (tri-snRNP) complex in the presence of pre-mRNAs. Interacts (via SAM domain) with MAGI2 (via PDZ 6 domain); the interaction is triggered by phosphorylation of USH1G by CK2 and negatively regulates MAGI2-mediated endocytosis. As to expression, detected in stereocilia from cochlear hair cells (at protein level). Detected in retinal photoreceptor cell cilia (at protein level). Highly expressed in the cochlea, testis, cerebellum and eye, and low levels in brain, thymus and spleen. Significant signals detected in the neurosensory epithelium of inner ear cochlea and saccule, especially in inner and outer hair cells.

It is found in the cytoplasm. The protein resides in the cytosol. It localises to the cytoskeleton. The protein localises to the cell membrane. Its subcellular location is the cell projection. It is found in the cilium. The protein resides in the nucleus speckle. It localises to the nucleus. The protein localises to the cajal body. Its subcellular location is the microtubule organizing center. It is found in the centrosome. The protein resides in the photoreceptor inner segment. Functionally, plays a role in pre-mRNA splicing by regulating the release and transfer of U4/U6.U5 tri-small nuclear ribonucleoprotein (tri-snRNP) complexes from their assembly site in Cajal bodies to nuclear speckles, thereby contributing to the assembly of the pre-catalytic spliceosome on target pre-mRNAs. May also participate in recycling of snRNPs back to Cajal bodies during splicing. Plays a role in regulating MAGI2-mediated endocytosis. Anchoring/scaffolding protein that is a part of the functional network formed by USH1C, USH1G, CDH23 and MYO7A that mediates mechanotransduction in cochlear hair cells. Required for normal development and maintenance of cochlear hair cell bundles. Required for normal hearing. This is pre-mRNA splicing regulator USH1G (Ush1g) from Mus musculus (Mouse).